Consider the following 481-residue polypeptide: Argininosuccinate synthase (481 aa).

ATP contacts are provided by residues 17-25 (AFSGGLDTS) and alanine 43. Tyrosine 99 contributes to the L-citrulline binding site. Glycine 129 and threonine 131 together coordinate ATP. Positions 131, 135, and 136 each coordinate L-aspartate. Asparagine 135 contacts L-citrulline. Residue aspartate 136 participates in ATP binding. Arginine 139 and serine 192 together coordinate L-citrulline. Aspartate 194 is an ATP binding site. L-citrulline-binding residues include threonine 201, glutamate 203, and glutamate 280.

Belongs to the argininosuccinate synthase family. Type 2 subfamily. In terms of assembly, homotetramer.

It is found in the cytoplasm. It carries out the reaction L-citrulline + L-aspartate + ATP = 2-(N(omega)-L-arginino)succinate + AMP + diphosphate + H(+). Its pathway is amino-acid biosynthesis; L-arginine biosynthesis; L-arginine from L-ornithine and carbamoyl phosphate: step 2/3. The protein is Argininosuccinate synthase (argG) of Streptomyces coelicolor (strain ATCC BAA-471 / A3(2) / M145).